The primary structure comprises 1507 residues: Protein similar (1507 aa).

The segment at 1 to 85 (MVSLIDTIEA…KSRDAARCRR (85 aa)) is disordered. The span at 26 to 49 (SASSSSCSSSFSSSPPSSSVGSPS) shows a compositional bias: low complexity. Residues 72 to 85 (KRKEKSRDAARCRR) are compositionally biased toward basic and acidic residues. The region spanning 72 to 125 (KRKEKSRDAARCRRSKETEIFMELSAALPLKTDDVNQLDKASVMRITIAFLKIR) is the bHLH domain. 2 PAS domains span residues 167–240 (NGAE…LAQK) and 307–377 (PHPS…LSKG). Positions 381–422 (TSRYRFLGKYGGYCWILSQATIVYDKLKPQSVVCVNYVISNL) constitute a PAC domain. Disordered regions lie at residues 433–459 (QQTA…KAAD), 541–588 (HSPG…PPPT), 706–832 (TCST…CSPN), and 900–951 (YAGN…QAAV). Residues 439–459 (EQKEQHHQAAETEKEPEKAAD) show a composition bias toward basic and acidic residues. Positions 548–559 (ITAQLLSGSSSG) are enriched in polar residues. Pro residues predominate over residues 578 to 588 (SPAPPLTPPPT). Residues 692 to 863 (TCLLPEDINS…IDDDMPLLTE (172 aa)) are ODD. A compositionally biased stretch (polar residues) spans 706–717 (TCSTTASGQHYQ). Low complexity-rich tracts occupy residues 718-745 (SPSS…LSPL) and 754-777 (SNPS…QQQH). The segment covering 803–818 (DTSCSQHLHSPSITSK) has biased composition (polar residues). 3 stretches are compositionally biased toward low complexity: residues 823-832 (SSLPSLCSPN), 907-918 (QQQQQQPQLQQQ), and 926-951 (SSPA…QAAV). Residues 880–908 (KEIDAIQQQLQQLQQQHHQQYAGNTGYQQ) are a coiled coil. 2 coiled-coil regions span residues 982 to 1054 (AEEC…YDVQ) and 1110 to 1162 (QLLQ…QLQQ). Disordered regions lie at residues 1204-1228 (PQQQ…VESK), 1251-1287 (KDPA…QSNS), and 1356-1460 (FGGS…KTSI). Positions 1413 to 1423 (SSTSNSTNQAE) are enriched in polar residues.

Efficient DNA binding requires dimerization with another bHLH protein. Interacts with Vhl. In terms of tissue distribution, ubiquitously expressed in the embryo.

The protein localises to the cytoplasm. It localises to the nucleus. Functionally, functions as a transcriptional regulator of the adaptive response to hypoxia. Binds to core DNA sequence 5'-[AG]CGTG-3' within the hypoxia response element (HRE) of target gene promoters. This is Protein similar (sima) from Drosophila melanogaster (Fruit fly).